The sequence spans 510 residues: Light-independent protochlorophyllide reductase subunit B (510 aa).

Asp36 contacts [4Fe-4S] cluster. The active-site Proton donor is the Asp297. 432 to 433 is a substrate binding site; it reads GM.

The protein belongs to the ChlB/BchB/BchZ family. Protochlorophyllide reductase is composed of three subunits; ChlL, ChlN and ChlB. Forms a heterotetramer of two ChlB and two ChlN subunits. [4Fe-4S] cluster is required as a cofactor.

It localises to the plastid. Its subcellular location is the chloroplast. It catalyses the reaction chlorophyllide a + oxidized 2[4Fe-4S]-[ferredoxin] + 2 ADP + 2 phosphate = protochlorophyllide a + reduced 2[4Fe-4S]-[ferredoxin] + 2 ATP + 2 H2O. The protein operates within porphyrin-containing compound metabolism; chlorophyll biosynthesis (light-independent). In terms of biological role, component of the dark-operative protochlorophyllide reductase (DPOR) that uses Mg-ATP and reduced ferredoxin to reduce ring D of protochlorophyllide (Pchlide) to form chlorophyllide a (Chlide). This reaction is light-independent. The NB-protein (ChlN-ChlB) is the catalytic component of the complex. The polypeptide is Light-independent protochlorophyllide reductase subunit B (Pinus koraiensis (Korean pine)).